We begin with the raw amino-acid sequence, 537 residues long: Arginine--tRNA ligase (537 aa).

The short motif at 113–123 (ANPTGELHLGH) is the 'HIGH' region element.

Belongs to the class-I aminoacyl-tRNA synthetase family. Monomer.

The protein resides in the cytoplasm. It carries out the reaction tRNA(Arg) + L-arginine + ATP = L-arginyl-tRNA(Arg) + AMP + diphosphate. This chain is Arginine--tRNA ligase (argS), found in Mycoplasma pneumoniae (strain ATCC 29342 / M129 / Subtype 1) (Mycoplasmoides pneumoniae).